We begin with the raw amino-acid sequence, 134 residues long: Ribonuclease P protein component 2 (134 aa).

Belongs to the eukaryotic/archaeal RNase P protein component 2 family. As to quaternary structure, consists of a catalytic RNA component and at least 4-5 protein subunits. Forms a subcomplex with Rnp3 which stimulates the catalytic RNA.

The protein resides in the cytoplasm. The enzyme catalyses Endonucleolytic cleavage of RNA, removing 5'-extranucleotides from tRNA precursor.. Its function is as follows. Part of ribonuclease P, a protein complex that generates mature tRNA molecules by cleaving their 5'-ends. The polypeptide is Ribonuclease P protein component 2 (Methanocaldococcus jannaschii (strain ATCC 43067 / DSM 2661 / JAL-1 / JCM 10045 / NBRC 100440) (Methanococcus jannaschii)).